We begin with the raw amino-acid sequence, 332 residues long: Holliday junction branch migration complex subunit RuvB (332 aa).

The large ATPase domain (RuvB-L) stretch occupies residues 1–181; it reads MARILDNNVM…FGITGHMEYY (181 aa). Residues Leu-20, Arg-21, Gly-62, Lys-65, Thr-66, Thr-67, 128–130, Arg-171, Tyr-181, and Arg-218 contribute to the ATP site; that span reads EDF. Thr-66 serves as a coordination point for Mg(2+). Positions 182–252 are small ATPAse domain (RuvB-S); sequence QEKDLTEIVE…ITDRALTMLD (71 aa). The head domain (RuvB-H) stretch occupies residues 255–332; sequence REGLDYIDQK…RHLGYPYQNT (78 aa). Arg-291, Arg-310, Arg-312, and Arg-315 together coordinate DNA.

The protein belongs to the RuvB family. Homohexamer. Forms an RuvA(8)-RuvB(12)-Holliday junction (HJ) complex. HJ DNA is sandwiched between 2 RuvA tetramers; dsDNA enters through RuvA and exits via RuvB. An RuvB hexamer assembles on each DNA strand where it exits the tetramer. Each RuvB hexamer is contacted by two RuvA subunits (via domain III) on 2 adjacent RuvB subunits; this complex drives branch migration. In the full resolvosome a probable DNA-RuvA(4)-RuvB(12)-RuvC(2) complex forms which resolves the HJ.

It is found in the cytoplasm. The enzyme catalyses ATP + H2O = ADP + phosphate + H(+). The RuvA-RuvB-RuvC complex processes Holliday junction (HJ) DNA during genetic recombination and DNA repair, while the RuvA-RuvB complex plays an important role in the rescue of blocked DNA replication forks via replication fork reversal (RFR). RuvA specifically binds to HJ cruciform DNA, conferring on it an open structure. The RuvB hexamer acts as an ATP-dependent pump, pulling dsDNA into and through the RuvAB complex. RuvB forms 2 homohexamers on either side of HJ DNA bound by 1 or 2 RuvA tetramers; 4 subunits per hexamer contact DNA at a time. Coordinated motions by a converter formed by DNA-disengaged RuvB subunits stimulates ATP hydrolysis and nucleotide exchange. Immobilization of the converter enables RuvB to convert the ATP-contained energy into a lever motion, pulling 2 nucleotides of DNA out of the RuvA tetramer per ATP hydrolyzed, thus driving DNA branch migration. The RuvB motors rotate together with the DNA substrate, which together with the progressing nucleotide cycle form the mechanistic basis for DNA recombination by continuous HJ branch migration. Branch migration allows RuvC to scan DNA until it finds its consensus sequence, where it cleaves and resolves cruciform DNA. The sequence is that of Holliday junction branch migration complex subunit RuvB from Streptococcus pyogenes serotype M1.